A 98-amino-acid polypeptide reads, in one-letter code: 10 kDa chaperonin, mitochondrial (98 aa).

The transit peptide at 1 to 17 directs the protein to the mitochondrion; the sequence is MMKRLIPTFNRILVQRV. The segment at 18–94 is cpn-10 domain; that stretch reads IQPAKTESGI…LFRDEDVLGT (77 aa).

This sequence belongs to the GroES chaperonin family. As to quaternary structure, forms stable complexes with CPN60 in the presence of ATP.

Its subcellular location is the mitochondrion. Functionally, seems to function only as a co-chaperone, along with CPN60, and in certain cases is essential for the discharge of biologically active proteins from CPN60. This Arabidopsis thaliana (Mouse-ear cress) protein is 10 kDa chaperonin, mitochondrial (CPN10).